The primary structure comprises 499 residues: Argininosuccinate lyase (499 aa).

The segment at 1–22 (MSDGEDHETANADDRDETVVRR) is disordered. The span at 7–22 (HETANADDRDETVVRR) shows a compositional bias: basic and acidic residues.

Belongs to the lyase 1 family. Argininosuccinate lyase subfamily.

Its subcellular location is the cytoplasm. It carries out the reaction 2-(N(omega)-L-arginino)succinate = fumarate + L-arginine. Its pathway is amino-acid biosynthesis; L-arginine biosynthesis; L-arginine from L-ornithine and carbamoyl phosphate: step 3/3. The protein is Argininosuccinate lyase of Haloarcula marismortui (strain ATCC 43049 / DSM 3752 / JCM 8966 / VKM B-1809) (Halobacterium marismortui).